The primary structure comprises 323 residues: RNA polymerase sigma factor SigB (323 aa).

Residues 1 to 228 form a sufficient to interact with RbpA region; sequence MADAPTRATT…DMPVGSEEEA (228 aa). A sigma-70 factor domain-1 region spans residues 25–59; sequence DLVRVYLNGIGKTALLNAAGEVELAKRIEAGLYAE. The tract at residues 90–160 is sigma-70 factor domain-2; it reads LLEANLRLVV…TRGMADQSRT (71 aa). The short motif at 114 to 117 is the Polymerase core binding element; that stretch reads DLIQ. A sigma-70 factor domain-3 region spans residues 169–245; the sequence is EQVNKLARIK…DAEAMSAENA (77 aa). Residues 258 to 311 are sigma-70 factor domain-4; the sequence is VLATLDEREHQVIRLRFGLDDGQPRTLDQIGKLFGLSRERVRQIERDVMSKLRH. A DNA-binding region (H-T-H motif) is located at residues 284-303; it reads LDQIGKLFGLSRERVRQIER.

The protein belongs to the sigma-70 factor family. As to quaternary structure, monomer. Interacts transiently with the RNA polymerase catalytic core formed by RpoA, RpoB, RpoC and RpoZ (2 alpha, 1 beta, 1 beta' and 1 omega subunit) to form the RNA polymerase holoenzyme that can initiate transcription.

Sigma factors are initiation factors that promote the attachment of RNA polymerase to specific initiation sites and are then released. A non-essential principal sigma factor that responds to cell envelope stress and hypoxia. This chain is RNA polymerase sigma factor SigB (sigB), found in Mycobacterium tuberculosis (strain CDC 1551 / Oshkosh).